The following is a 46-amino-acid chain: uncharacterized protein (46 aa).

The tract at residues 1–46 is disordered; it reads MNFGIKPDVSSGPRKGGPFKELSDFSKTSPTPQQPRSLSGKSVMLP. Polar residues predominate over residues 25-40; it reads FSKTSPTPQQPRSLSG.

This is an uncharacterized protein from Dictyostelium discoideum (Social amoeba).